The primary structure comprises 310 residues: Methionyl-tRNA formyltransferase (310 aa).

A (6S)-5,6,7,8-tetrahydrofolate-binding site is contributed by 110–113; it reads SVLP. The interval 283–310 is disordered; sequence TVQPPGKKSMNAADWARGARAEDIRRAR. Residues 299 to 310 are compositionally biased toward basic and acidic residues; that stretch reads RGARAEDIRRAR.

Belongs to the Fmt family.

The enzyme catalyses L-methionyl-tRNA(fMet) + (6R)-10-formyltetrahydrofolate = N-formyl-L-methionyl-tRNA(fMet) + (6S)-5,6,7,8-tetrahydrofolate + H(+). Attaches a formyl group to the free amino group of methionyl-tRNA(fMet). The formyl group appears to play a dual role in the initiator identity of N-formylmethionyl-tRNA by promoting its recognition by IF2 and preventing the misappropriation of this tRNA by the elongation apparatus. This is Methionyl-tRNA formyltransferase from Mycolicibacterium gilvum (strain PYR-GCK) (Mycobacterium gilvum (strain PYR-GCK)).